The chain runs to 90 residues: Small ribosomal subunit protein bS16 (90 aa).

This sequence belongs to the bacterial ribosomal protein bS16 family.

The chain is Small ribosomal subunit protein bS16 from Listeria innocua serovar 6a (strain ATCC BAA-680 / CLIP 11262).